A 292-amino-acid chain; its full sequence is 33 kDa chaperonin (292 aa).

Cystine bridges form between Cys-238/Cys-240 and Cys-271/Cys-274.

It belongs to the HSP33 family. Under oxidizing conditions two disulfide bonds are formed involving the reactive cysteines. Under reducing conditions zinc is bound to the reactive cysteines and the protein is inactive.

The protein localises to the cytoplasm. Functionally, redox regulated molecular chaperone. Protects both thermally unfolding and oxidatively damaged proteins from irreversible aggregation. Plays an important role in the bacterial defense system toward oxidative stress. The polypeptide is 33 kDa chaperonin (Alkaliphilus metalliredigens (strain QYMF)).